We begin with the raw amino-acid sequence, 348 residues long: Holliday junction branch migration complex subunit RuvB (348 aa).

Polar residues predominate over residues Met-1–Ser-10. The interval Met-1–Leu-41 is disordered. The segment at Pro-13–Tyr-197 is large ATPase domain (RuvB-L). The span at Ser-28 to Leu-41 shows a compositional bias: basic and acidic residues. Positions 36, 37, 78, 81, 82, 83, 187, 197, and 234 each coordinate ATP. Thr-82 contributes to the Mg(2+) binding site. The interval Gly-198 to Arg-269 is small ATPAse domain (RuvB-S). The interval His-272–Ala-348 is head domain (RuvB-H). Residues Arg-327 and Arg-332 each coordinate DNA.

Belongs to the RuvB family. In terms of assembly, homohexamer. Forms an RuvA(8)-RuvB(12)-Holliday junction (HJ) complex. HJ DNA is sandwiched between 2 RuvA tetramers; dsDNA enters through RuvA and exits via RuvB. An RuvB hexamer assembles on each DNA strand where it exits the tetramer. Each RuvB hexamer is contacted by two RuvA subunits (via domain III) on 2 adjacent RuvB subunits; this complex drives branch migration. In the full resolvosome a probable DNA-RuvA(4)-RuvB(12)-RuvC(2) complex forms which resolves the HJ.

Its subcellular location is the cytoplasm. The enzyme catalyses ATP + H2O = ADP + phosphate + H(+). The RuvA-RuvB-RuvC complex processes Holliday junction (HJ) DNA during genetic recombination and DNA repair, while the RuvA-RuvB complex plays an important role in the rescue of blocked DNA replication forks via replication fork reversal (RFR). RuvA specifically binds to HJ cruciform DNA, conferring on it an open structure. The RuvB hexamer acts as an ATP-dependent pump, pulling dsDNA into and through the RuvAB complex. RuvB forms 2 homohexamers on either side of HJ DNA bound by 1 or 2 RuvA tetramers; 4 subunits per hexamer contact DNA at a time. Coordinated motions by a converter formed by DNA-disengaged RuvB subunits stimulates ATP hydrolysis and nucleotide exchange. Immobilization of the converter enables RuvB to convert the ATP-contained energy into a lever motion, pulling 2 nucleotides of DNA out of the RuvA tetramer per ATP hydrolyzed, thus driving DNA branch migration. The RuvB motors rotate together with the DNA substrate, which together with the progressing nucleotide cycle form the mechanistic basis for DNA recombination by continuous HJ branch migration. Branch migration allows RuvC to scan DNA until it finds its consensus sequence, where it cleaves and resolves cruciform DNA. The chain is Holliday junction branch migration complex subunit RuvB from Parasynechococcus marenigrum (strain WH8102).